The primary structure comprises 277 residues: MSVPTVLERIIARKFQEVAERSARVSLAELEALAKAADAPRGFANALIEQAKRKQPAVIAEIKKASPSKGVIREHFVPAEIAVSYEKGGATCLSVLTDVDYFQGADVYLQQARAAVSLPVIRKDFMVDPYQIVEARALGADCVLLIVSALDDVKMAELAATAKDVGLDVLVEVHDGDELERALKTLDTPLVGVNNRNLHTFEVSLETTLDLLPRIPRDRLAITESGILNRADVELMAINEVYSFLVGEAFMRAEQPGLELQRLFFPEQVKKTVQPLD.

Belongs to the TrpC family.

It carries out the reaction 1-(2-carboxyphenylamino)-1-deoxy-D-ribulose 5-phosphate + H(+) = (1S,2R)-1-C-(indol-3-yl)glycerol 3-phosphate + CO2 + H2O. It functions in the pathway amino-acid biosynthesis; L-tryptophan biosynthesis; L-tryptophan from chorismate: step 4/5. This chain is Indole-3-glycerol phosphate synthase, found in Pseudomonas putida (strain GB-1).